A 152-amino-acid chain; its full sequence is Large ribosomal subunit protein uL13 (152 aa).

The protein belongs to the universal ribosomal protein uL13 family. As to quaternary structure, part of the 50S ribosomal subunit.

Its function is as follows. This protein is one of the early assembly proteins of the 50S ribosomal subunit, although it is not seen to bind rRNA by itself. It is important during the early stages of 50S assembly. The sequence is that of Large ribosomal subunit protein uL13 from Wolbachia pipientis wMel.